We begin with the raw amino-acid sequence, 406 residues long: Phosphopentomutase (406 aa).

Mn(2+) contacts are provided by Asp-10, Asp-305, His-310, Asp-346, His-347, and His-358.

This sequence belongs to the phosphopentomutase family. Mn(2+) is required as a cofactor.

The protein resides in the cytoplasm. It carries out the reaction 2-deoxy-alpha-D-ribose 1-phosphate = 2-deoxy-D-ribose 5-phosphate. The catalysed reaction is alpha-D-ribose 1-phosphate = D-ribose 5-phosphate. It participates in carbohydrate degradation; 2-deoxy-D-ribose 1-phosphate degradation; D-glyceraldehyde 3-phosphate and acetaldehyde from 2-deoxy-alpha-D-ribose 1-phosphate: step 1/2. In terms of biological role, isomerase that catalyzes the conversion of deoxy-ribose 1-phosphate (dRib-1-P) and ribose 1-phosphate (Rib-1-P) to deoxy-ribose 5-phosphate (dRib-5-P) and ribose 5-phosphate (Rib-5-P), respectively. This is Phosphopentomutase from Vibrio parahaemolyticus serotype O3:K6 (strain RIMD 2210633).